The chain runs to 101 residues: Small ribosomal subunit protein uS14 (101 aa).

The protein belongs to the universal ribosomal protein uS14 family. As to quaternary structure, part of the 30S ribosomal subunit. Contacts proteins S3 and S10.

Binds 16S rRNA, required for the assembly of 30S particles and may also be responsible for determining the conformation of the 16S rRNA at the A site. This Shewanella frigidimarina (strain NCIMB 400) protein is Small ribosomal subunit protein uS14.